Reading from the N-terminus, the 436-residue chain is 3-ketoacyl-CoA thiolase (436 aa).

Cys99 serves as the catalytic Acyl-thioester intermediate. Active-site proton acceptor residues include His392 and Cys422.

This sequence belongs to the thiolase-like superfamily. Thiolase family. As to quaternary structure, heterotetramer of two alpha chains (FadJ) and two beta chains (FadI).

The protein resides in the cytoplasm. The enzyme catalyses an acyl-CoA + acetyl-CoA = a 3-oxoacyl-CoA + CoA. It functions in the pathway lipid metabolism; fatty acid beta-oxidation. Functionally, catalyzes the final step of fatty acid oxidation in which acetyl-CoA is released and the CoA ester of a fatty acid two carbons shorter is formed. This chain is 3-ketoacyl-CoA thiolase, found in Salmonella typhi.